We begin with the raw amino-acid sequence, 1892 residues long: Alpha-2-macroglobulin (1892 aa).

A signal peptide spans 1 to 23 (MKNIFRKFVFTIFVCLINLQLIA). Positions 1441–1444 (CTEQ) form a cross-link, isoglutamyl cysteine thioester (Cys-Gln).

This sequence belongs to the protease inhibitor I39 (alpha-2-macroglobulin) family. Bacterial alpha-2-macroglobulin subfamily.

Its function is as follows. Protects the bacterial cell from host peptidases. The sequence is that of Alpha-2-macroglobulin from Rickettsia conorii (strain ATCC VR-613 / Malish 7).